We begin with the raw amino-acid sequence, 264 residues long: Acyl-[acyl-carrier-protein]--UDP-N-acetylglucosamine O-acyltransferase (264 aa).

The protein belongs to the transferase hexapeptide repeat family. LpxA subfamily. In terms of assembly, homotrimer.

It localises to the cytoplasm. It catalyses the reaction a (3R)-hydroxyacyl-[ACP] + UDP-N-acetyl-alpha-D-glucosamine = a UDP-3-O-[(3R)-3-hydroxyacyl]-N-acetyl-alpha-D-glucosamine + holo-[ACP]. The protein operates within glycolipid biosynthesis; lipid IV(A) biosynthesis; lipid IV(A) from (3R)-3-hydroxytetradecanoyl-[acyl-carrier-protein] and UDP-N-acetyl-alpha-D-glucosamine: step 1/6. Functionally, involved in the biosynthesis of lipid A, a phosphorylated glycolipid that anchors the lipopolysaccharide to the outer membrane of the cell. This Rickettsia prowazekii (strain Madrid E) protein is Acyl-[acyl-carrier-protein]--UDP-N-acetylglucosamine O-acyltransferase.